Here is a 422-residue protein sequence, read N- to C-terminus: UDP-N-acetylglucosamine 1-carboxyvinyltransferase (422 aa).

23–24 (KN) lines the phosphoenolpyruvate pocket. Arg92 lines the UDP-N-acetyl-alpha-D-glucosamine pocket. Catalysis depends on Cys116, which acts as the Proton donor. Cys116 is subject to 2-(S-cysteinyl)pyruvic acid O-phosphothioketal. UDP-N-acetyl-alpha-D-glucosamine contacts are provided by residues 121-125 (RPVDL), 161-164 (KVSV), Asp306, and Ile328.

It belongs to the EPSP synthase family. MurA subfamily.

The protein localises to the cytoplasm. The catalysed reaction is phosphoenolpyruvate + UDP-N-acetyl-alpha-D-glucosamine = UDP-N-acetyl-3-O-(1-carboxyvinyl)-alpha-D-glucosamine + phosphate. The protein operates within cell wall biogenesis; peptidoglycan biosynthesis. In terms of biological role, cell wall formation. Adds enolpyruvyl to UDP-N-acetylglucosamine. The polypeptide is UDP-N-acetylglucosamine 1-carboxyvinyltransferase (Aliivibrio salmonicida (strain LFI1238) (Vibrio salmonicida (strain LFI1238))).